Reading from the N-terminus, the 355-residue chain is Elongation factor Ts (355 aa).

Residues 82–85 are involved in Mg(2+) ion dislocation from EF-Tu; the sequence is TDFV.

This sequence belongs to the EF-Ts family.

Its subcellular location is the cytoplasm. Its function is as follows. Associates with the EF-Tu.GDP complex and induces the exchange of GDP to GTP. It remains bound to the aminoacyl-tRNA.EF-Tu.GTP complex up to the GTP hydrolysis stage on the ribosome. The sequence is that of Elongation factor Ts from Helicobacter pylori (strain G27).